Here is a 245-residue protein sequence, read N- to C-terminus: 1-(5-phosphoribosyl)-5-[(5-phosphoribosylamino)methylideneamino] imidazole-4-carboxamide isomerase (245 aa).

The active-site Proton acceptor is the Asp8. The Proton donor role is filled by Asp130.

Belongs to the HisA/HisF family.

Its subcellular location is the cytoplasm. The catalysed reaction is 1-(5-phospho-beta-D-ribosyl)-5-[(5-phospho-beta-D-ribosylamino)methylideneamino]imidazole-4-carboxamide = 5-[(5-phospho-1-deoxy-D-ribulos-1-ylimino)methylamino]-1-(5-phospho-beta-D-ribosyl)imidazole-4-carboxamide. The protein operates within amino-acid biosynthesis; L-histidine biosynthesis; L-histidine from 5-phospho-alpha-D-ribose 1-diphosphate: step 4/9. The polypeptide is 1-(5-phosphoribosyl)-5-[(5-phosphoribosylamino)methylideneamino] imidazole-4-carboxamide isomerase (Pseudomonas syringae pv. tomato (strain ATCC BAA-871 / DC3000)).